A 392-amino-acid polypeptide reads, in one-letter code: Formate-dependent phosphoribosylglycinamide formyltransferase (392 aa).

N(1)-(5-phospho-beta-D-ribosyl)glycinamide contacts are provided by residues 22-23 (EL) and Glu82. ATP contacts are provided by residues Arg114, Lys155, 160–165 (SSGKGQ), 195–198 (EGVV), and Glu203. In terms of domain architecture, ATP-grasp spans 119-308 (RLAAEELQLP…EFALHVRAFL (190 aa)). Residues Glu267 and Glu279 each coordinate Mg(2+). N(1)-(5-phospho-beta-D-ribosyl)glycinamide-binding positions include Asp286, Lys355, and 362–363 (RR).

This sequence belongs to the PurK/PurT family. In terms of assembly, homodimer.

The catalysed reaction is N(1)-(5-phospho-beta-D-ribosyl)glycinamide + formate + ATP = N(2)-formyl-N(1)-(5-phospho-beta-D-ribosyl)glycinamide + ADP + phosphate + H(+). The protein operates within purine metabolism; IMP biosynthesis via de novo pathway; N(2)-formyl-N(1)-(5-phospho-D-ribosyl)glycinamide from N(1)-(5-phospho-D-ribosyl)glycinamide (formate route): step 1/1. Involved in the de novo purine biosynthesis. Catalyzes the transfer of formate to 5-phospho-ribosyl-glycinamide (GAR), producing 5-phospho-ribosyl-N-formylglycinamide (FGAR). Formate is provided by PurU via hydrolysis of 10-formyl-tetrahydrofolate. The protein is Formate-dependent phosphoribosylglycinamide formyltransferase of Shigella boydii serotype 4 (strain Sb227).